Here is a 130-residue protein sequence, read N- to C-terminus: Small ribosomal subunit protein uS8 (130 aa).

This sequence belongs to the universal ribosomal protein uS8 family. Part of the 30S ribosomal subunit. Contacts proteins S5 and S12.

Functionally, one of the primary rRNA binding proteins, it binds directly to 16S rRNA central domain where it helps coordinate assembly of the platform of the 30S subunit. This chain is Small ribosomal subunit protein uS8, found in Tolumonas auensis (strain DSM 9187 / NBRC 110442 / TA 4).